The primary structure comprises 97 residues: MNIRPLHDRVIVKRKEVETKSAGGIVLTGSAAAKSTRGEIIAVGKGHILEKGTVQPLDVKVGDIVIFNDGYGVKSEKIDNEEVLIMSESDILAIVEA.

It belongs to the GroES chaperonin family. As to quaternary structure, heptamer of 7 subunits arranged in a ring. Interacts with the chaperonin GroEL.

It localises to the cytoplasm. Functionally, together with the chaperonin GroEL, plays an essential role in assisting protein folding. The GroEL-GroES system forms a nano-cage that allows encapsulation of the non-native substrate proteins and provides a physical environment optimized to promote and accelerate protein folding. GroES binds to the apical surface of the GroEL ring, thereby capping the opening of the GroEL channel. The sequence is that of Co-chaperonin GroES from Klebsiella aerogenes (Enterobacter aerogenes).